A 125-amino-acid chain; its full sequence is Phosphoribosyl-AMP cyclohydrolase (125 aa).

Asp74 contacts Mg(2+). Cys75 serves as a coordination point for Zn(2+). 2 residues coordinate Mg(2+): Asp76 and Asp78. Zn(2+)-binding residues include Cys92 and Cys99.

This sequence belongs to the PRA-CH family. In terms of assembly, homodimer. Mg(2+) serves as cofactor. It depends on Zn(2+) as a cofactor.

The protein localises to the cytoplasm. It catalyses the reaction 1-(5-phospho-beta-D-ribosyl)-5'-AMP + H2O = 1-(5-phospho-beta-D-ribosyl)-5-[(5-phospho-beta-D-ribosylamino)methylideneamino]imidazole-4-carboxamide. The protein operates within amino-acid biosynthesis; L-histidine biosynthesis; L-histidine from 5-phospho-alpha-D-ribose 1-diphosphate: step 3/9. Its function is as follows. Catalyzes the hydrolysis of the adenine ring of phosphoribosyl-AMP. The sequence is that of Phosphoribosyl-AMP cyclohydrolase from Trichlorobacter lovleyi (strain ATCC BAA-1151 / DSM 17278 / SZ) (Geobacter lovleyi).